Here is a 62-residue protein sequence, read N- to C-terminus: MGKQCYVTGRKASTGNRRSHALNSTKRRWNANLQKVRILVDGKPKKVWVSARALKSGKVTRV.

Residues 1 to 23 (MGKQCYVTGRKASTGNRRSHALN) are disordered.

It belongs to the bacterial ribosomal protein bL28 family.

This Staphylococcus carnosus (strain TM300) protein is Large ribosomal subunit protein bL28.